Here is a 347-residue protein sequence, read N- to C-terminus: Integrin beta-1-binding protein 2 (347 aa).

Residues Cys-5, Cys-10, Cys-24, and His-27 each coordinate Zn(2+). The CHORD 1 domain maps to 5–64 (CRNKGCGQHFDPNTNLPDSCCHHPGVPIFHDALKGWSCCRKRTVDFSEFLNIKGCTMGPH). Residues 28 to 31 (PGVP) carry the SH3-binding motif. Cys-42, Cys-43, Cys-59, and His-64 together coordinate Zn(2+). An SH3-binding motif is present at residues 70-78 (PEAPQPEGP). Zn(2+) is bound by residues Cys-149 and Cys-154. A CHORD 2 domain is found at 149-208 (CQNPGCDAVYQGPESDATPCTYHPGAPRFHEGMKSWSCCGIQTLDFGAFLAQPGCRVGRH). An SH2-binding motif is present at residues 158–161 (YQGP). The Zn(2+) site is built by Cys-168 and His-171. The short motif at 172–175 (PGAP) is the SH3-binding element. Positions 186, 187, 203, and 208 each coordinate Zn(2+). A CS domain is found at 215 to 304 (PASCRHDWHQ…ADPGSWAQLE (90 aa)). The SH2-binding motif lies at 234–237 (YGQI). The segment at 319–347 (LEMDEEESDDSDDDLSWTEEEEEEEAMGE) is disordered. Over residues 320–347 (EMDEEESDDSDDDLSWTEEEEEEEAMGE) the composition is skewed to acidic residues.

In terms of assembly, interacts with beta-1 integrin subunit. This interaction is regulated by divalent cations, and it occurs only in absence of calcium. Expressed in skeletal and cardiac muscles but not in other tissues.

In terms of biological role, may play a role during maturation and/or organization of muscles cells. In Homo sapiens (Human), this protein is Integrin beta-1-binding protein 2 (ITGB1BP2).